Consider the following 65-residue polypeptide: Hirudin-2' (65 aa).

An interaction with thrombin active site region spans residues 1 to 3; the sequence is ITY. 3 disulfides stabilise this stretch: cysteine 6-cysteine 14, cysteine 16-cysteine 28, and cysteine 22-cysteine 39. The disordered stretch occupies residues 39-65; it reads CVTGEGTPKPQSHNDGDFEEIPEEYLQ. Threonine 45 carries O-linked (GalNAc...) threonine glycosylation. Residues 55–65 form an interaction with fibrinogen-binding exosite of thrombin region; it reads DFEEIPEEYLQ. Positions 55–65 are enriched in acidic residues; it reads DFEEIPEEYLQ. A Sulfotyrosine modification is found at tyrosine 63.

Belongs to the protease inhibitor I14 (hirudin) family.

The protein localises to the secreted. Hirudin is a potent thrombin-specific protease inhibitor. It forms a stable non-covalent complex with alpha-thrombin, thereby abolishing its ability to cleave fibrinogen. In Hirudo medicinalis (Medicinal leech), this protein is Hirudin-2'.